The sequence spans 429 residues: Cytochrome c biogenesis protein CcsB (429 aa).

Transmembrane regions (helical) follow at residues leucine 14–leucine 34, serine 72–lysine 92, and valine 162–valine 182.

Belongs to the Ccs1/CcsB family. In terms of assembly, may interact with CcsA.

It localises to the cellular thylakoid membrane. Functionally, required during biogenesis of c-type cytochromes (cytochrome c6 and cytochrome f) at the step of heme attachment. This chain is Cytochrome c biogenesis protein CcsB, found in Prochlorococcus marinus (strain SARG / CCMP1375 / SS120).